The primary structure comprises 295 residues: MTSTEWRTGLTGAQQAEIRALIDAATTHDGVAPVGDQVLRELGRDRTRHLLTTDDDRVVGYLNLAPAEGDDPAMAELVVHPQARRRGIGAAMARTALAEGGPGARIWAHGNIAAAQAMASSLRLVVVRELLQMRRPLTDLPPVPDTPGVRIATYAGPGDDAEILRVNNAAFSWHPEQGGWTEHEIDERRNEGWFDPEGLFQAFDEQTGSLLGFHWTKIHDASLGEVYVVGVDPQAQGRGLGYTLTLIGLHHLAEKLAGPEPTVLLYVEADNSAAVNTYRKLGFEVFSVDAAYAAN.

N-acetyltransferase domains are found at residues 4–138 and 149–295; these read TEWR…RPLT and VRIA…YAAN. Aspartate 36 is a binding site for 1D-myo-inositol 2-(L-cysteinylamino)-2-deoxy-alpha-D-glucopyranoside. Residues 77–79 and 85–90 each bind acetyl-CoA; these read LVV and RRGIGA. The 1D-myo-inositol 2-(L-cysteinylamino)-2-deoxy-alpha-D-glucopyranoside site is built by glutamate 176, lysine 217, and glutamate 225. Residues 229–231 and 236–242 each bind acetyl-CoA; these read VGV and QGRGLGY. Tyrosine 266 provides a ligand contact to 1D-myo-inositol 2-(L-cysteinylamino)-2-deoxy-alpha-D-glucopyranoside. Acetyl-CoA is bound at residue 271–276; sequence NSAAVN.

It belongs to the acetyltransferase family. MshD subfamily. Monomer.

The catalysed reaction is 1D-myo-inositol 2-(L-cysteinylamino)-2-deoxy-alpha-D-glucopyranoside + acetyl-CoA = mycothiol + CoA + H(+). Catalyzes the transfer of acetyl from acetyl-CoA to desacetylmycothiol (Cys-GlcN-Ins) to form mycothiol. In Mycolicibacterium smegmatis (strain ATCC 700084 / mc(2)155) (Mycobacterium smegmatis), this protein is Mycothiol acetyltransferase (mshD).